Consider the following 302-residue polypeptide: Sulfate adenylyltransferase subunit 2 (302 aa).

The disordered stretch occupies residues 280–302 (RQGRLIDSDQSASMEQKKRQGYF).

Belongs to the PAPS reductase family. CysD subfamily. As to quaternary structure, heterodimer composed of CysD, the smaller subunit, and CysN.

It catalyses the reaction sulfate + ATP + H(+) = adenosine 5'-phosphosulfate + diphosphate. The protein operates within sulfur metabolism; hydrogen sulfide biosynthesis; sulfite from sulfate: step 1/3. Functionally, with CysN forms the ATP sulfurylase (ATPS) that catalyzes the adenylation of sulfate producing adenosine 5'-phosphosulfate (APS) and diphosphate, the first enzymatic step in sulfur assimilation pathway. APS synthesis involves the formation of a high-energy phosphoric-sulfuric acid anhydride bond driven by GTP hydrolysis by CysN coupled to ATP hydrolysis by CysD. This Shewanella oneidensis (strain ATCC 700550 / JCM 31522 / CIP 106686 / LMG 19005 / NCIMB 14063 / MR-1) protein is Sulfate adenylyltransferase subunit 2.